The sequence spans 408 residues: Hepatocyte nuclear factor 4-gamma (408 aa).

A DNA-binding region (nuclear receptor) is located at residues 9 to 84 (NCLCAICGDR…AGMKKEAVQN (76 aa)). 2 NR C4-type zinc fingers span residues 12-32 (CAICGDRATGKHYGASSCDGC) and 48-72 (CRFSRQCVVDKDKRNQCRYCRLRKC). Ser94 carries the post-translational modification Phosphoserine. Residues 99 to 328 (SNIPSINTLA…NLLQEMLLGG (230 aa)) form the NR LBD domain. Positions 368–390 (ISTPETPLPSPPQGSGQEQYKIA) are disordered. Thr370 and Thr373 each carry phosphothreonine. The residue at position 377 (Ser377) is a Phosphoserine.

The protein belongs to the nuclear hormone receptor family. NR2 subfamily. Expressed in pancreas, kidney, small intestine and testis. Weakly expressed in colon. Not expressed in liver, skeletal muscle, lung, placenta, brain, heart, peripheral blood, ovary, prostate, thymus and spleen.

The protein localises to the nucleus. Its function is as follows. Transcription factor. Has a lower transcription activation potential than HNF4-alpha. The chain is Hepatocyte nuclear factor 4-gamma (HNF4G) from Homo sapiens (Human).